The chain runs to 269 residues: uncharacterized protein (269 aa).

Over residues methionine 1–histidine 12 the composition is skewed to basic residues. Residues methionine 1–valine 82 form a disordered region. A compositionally biased stretch (acidic residues) spans proline 21 to leucine 33. A compositionally biased stretch (basic and acidic residues) spans glutamate 34–asparagine 63.

This is an uncharacterized protein from Dictyostelium discoideum (Social amoeba).